A 116-amino-acid chain; its full sequence is NADH-ubiquinone oxidoreductase chain 3 (116 aa).

The next 3 helical transmembrane spans lie at 3–23, 56–76, and 87–107; these read LITT…TISF, FFLI…LLPL, and LTLI…IYEW.

Belongs to the complex I subunit 3 family.

The protein resides in the mitochondrion membrane. It catalyses the reaction a ubiquinone + NADH + 5 H(+)(in) = a ubiquinol + NAD(+) + 4 H(+)(out). Functionally, core subunit of the mitochondrial membrane respiratory chain NADH dehydrogenase (Complex I) that is believed to belong to the minimal assembly required for catalysis. Complex I functions in the transfer of electrons from NADH to the respiratory chain. The immediate electron acceptor for the enzyme is believed to be ubiquinone. This is NADH-ubiquinone oxidoreductase chain 3 (MT-ND3) from Oncorhynchus tshawytscha (Chinook salmon).